The chain runs to 428 residues: UDP-N-acetylglucosamine 1-carboxyvinyltransferase 2 (428 aa).

22–23 lines the phosphoenolpyruvate pocket; it reads KN. Arg-92 provides a ligand contact to UDP-N-acetyl-alpha-D-glucosamine. The active-site Proton donor is Cys-116. Cys-116 carries the 2-(S-cysteinyl)pyruvic acid O-phosphothioketal modification. Residues 121–125, Asp-304, and Ile-326 each bind UDP-N-acetyl-alpha-D-glucosamine; that span reads RPIDQ.

Belongs to the EPSP synthase family. MurA subfamily.

Its subcellular location is the cytoplasm. The enzyme catalyses phosphoenolpyruvate + UDP-N-acetyl-alpha-D-glucosamine = UDP-N-acetyl-3-O-(1-carboxyvinyl)-alpha-D-glucosamine + phosphate. It participates in cell wall biogenesis; peptidoglycan biosynthesis. Functionally, cell wall formation. Adds enolpyruvyl to UDP-N-acetylglucosamine. This chain is UDP-N-acetylglucosamine 1-carboxyvinyltransferase 2, found in Shouchella clausii (strain KSM-K16) (Alkalihalobacillus clausii).